A 919-amino-acid chain; its full sequence is Transcriptional regulatory protein EDS1 (919 aa).

The interval M1–R54 is disordered. Over residues S23–R36 the composition is skewed to polar residues. Residues N37 to T46 show a composition bias toward basic and acidic residues. The zn(2)-C6 fungal-type DNA-binding region spans C56–C85. Positions A297 to S338 are disordered. A compositionally biased stretch (basic and acidic residues) spans L304–S317. Residues T318–S338 show a composition bias toward polar residues.

As to quaternary structure, binds DNA in a sequence-specific manner.

It is found in the nucleus. The sequence is that of Transcriptional regulatory protein EDS1 (EDS1) from Saccharomyces cerevisiae (strain Lalvin EC1118 / Prise de mousse) (Baker's yeast).